We begin with the raw amino-acid sequence, 363 residues long: Ly6/PLAUR domain-containing protein 3 (363 aa).

Residues 1-32 (MDAARRGDTQPVMWTTGWLLLLPLLLCEGAQA) form the signal peptide. In terms of domain architecture, UPAR/Ly6 1 spans 35–128 (CYSCVQKADD…LNLTLRGLNP (94 aa)). Residues asparagine 120, asparagine 131, asparagine 178, and asparagine 185 are each glycosylated (N-linked (GlcNAc...) asparagine). Residues 142–224 (CYSCVGLSRE…GSCCQGPRCN (83 aa)) form the UPAR/Ly6 2 domain. Residues 238-248 (PPLVLLPPPTT) are compositionally biased toward pro residues. Disordered stretches follow at residues 238-287 (PPLV…TSPH) and 301-336 (LSGG…GGAQ). Positions 249 to 278 (AAPSTRAQNSSSTTSTAAPTTTTSIIKPTT) are enriched in low complexity. The segment covering 304–318 (GAAGHGGTAGHGGAA) has biased composition (gly residues). Residues 320 to 330 (HQDRSNMEKYP) show a composition bias toward basic and acidic residues. Residue serine 343 is the site of GPI-anchor amidated serine attachment. A propeptide spans 344 to 363 (GTLGSWLSAVLLTVVAGAML) (removed in mature form).

In terms of assembly, binds laminin-1 and laminin-5. Interacts with LGALS3. Interacts with AGR2 and AGR3.

It localises to the cell membrane. Supports cell migration. May be involved in tumor progression. This is Ly6/PLAUR domain-containing protein 3 (Lypd3) from Mus musculus (Mouse).